We begin with the raw amino-acid sequence, 232 residues long: Triggering receptor expressed on myeloid cells 1 (232 aa).

Residues M1–A20 form the signal peptide. In terms of domain architecture, Ig-like V-type spans A21 to R125. Residues A21–S203 lie on the Extracellular side of the membrane. A disulfide bridge connects residues C41 and C109. Residues P152–F186 form a disordered region. A glycan (N-linked (GlcNAc...) asparagine) is linked at N192. The chain crosses the membrane as a helical span at residues I204–A224. The Cytoplasmic segment spans residues V225–S232.

Monomer. Homomultimer; when activated. Interacts with TYROBP/DAP12. Interacts with TLR4. Detected in bone marrow, tongue, lung, liver, thymus, spleen, jejunum, ileum and lymph nodes.

Its subcellular location is the cell membrane. Cell surface receptor that plays important roles in innate and adaptive immunity by amplifying inflammatory responses. Upon activation by various ligands such as PGLYRP1, HMGB1 or HSP70, multimerizes and forms a complex with transmembrane adapter TYROBP/DAP12. In turn, initiates a SYK-mediated cascade of tyrosine phosphorylation, activating multiple downstream mediators such as BTK, MAPK1, MAPK3 or phospholipase C-gamma. This cascade promotes the neutrophil- and macrophage-mediated release of pro-inflammatory cytokines and/or chemokines, as well as their migration and thereby amplifies inflammatory responses that are triggered by bacterial and fungal infections. By also promoting the amplification of inflammatory signals that are initially triggered by Toll-like receptor (TLR) and NOD-like receptor engagement, plays a major role in the pathophysiology of acute and chronic inflammatory diseases of different etiologies including septic shock and atherosclerosis. The protein is Triggering receptor expressed on myeloid cells 1 (TREM1) of Bos taurus (Bovine).